A 928-amino-acid polypeptide reads, in one-letter code: Zinc metalloproteinase nas-39 (928 aa).

The N-terminal stretch at 1–30 (MRFSANIAIIVNIIFLFIVVEFVLPTFIRS) is a signal peptide. Residues 48–247 (AATAKKERIW…RQTKKLYKCA (200 aa)) enclose the Peptidase M12A domain. 2 N-linked (GlcNAc...) asparagine glycosylation sites follow: Asn-69 and Asn-87. Disulfide bonds link Cys-90-Cys-246, Cys-111-Cys-133, Cys-113-Cys-114, and Cys-249-Cys-268. His-141 provides a ligand contact to Zn(2+). The active site involves Glu-142. The Zn(2+) site is built by His-145 and His-151. CUB domains lie at 249–359 (CGGT…YAIC) and 360–476 (GGPI…FTKE). N-linked (GlcNAc...) asparagine glycosylation occurs at Asn-283. Cystine bridges form between Cys-359–Cys-385, Cys-412–Cys-439, Cys-480–Cys-491, Cys-487–Cys-500, Cys-502–Cys-515, and Cys-519–Cys-545. The EGF-like 1; calcium-binding domain maps to 477 to 516 (LNECATDKNICHHYCVNTVGGFKCACRVGYSLSSNGFSCD). A CUB 3 domain is found at 519–625 (CGGYLKASNG…DGFFANFIAD (107 aa)). N-linked (GlcNAc...) asparagine glycans are attached at residues Asn-527 and Asn-560. 8 disulfide bridges follow: Cys-573–Cys-587, Cys-629–Cys-640, Cys-636–Cys-649, Cys-651–Cys-664, Cys-669–Cys-695, Cys-722–Cys-744, Cys-782–Cys-812, and Cys-840–Cys-863. The 40-residue stretch at 626–665 (FDECQNDNAGCEHTCQNRLGSYVCTCNPGYILAEDKHNCK) folds into the EGF-like 2; calcium-binding domain. 2 CUB domains span residues 669–781 (CFFE…YTSL) and 782–900 (CGGR…YREA). A glycan (N-linked (GlcNAc...) asparagine) is linked at Asn-694. Residues 895–928 (AEYREAPRSSSTKRTFVSKTRHSPLEEPIHDRNE) form a disordered region. Polar residues predominate over residues 902-912 (RSSSTKRTFVS). Residues 917 to 928 (SPLEEPIHDRNE) show a composition bias toward basic and acidic residues.

The cofactor is Zn(2+). As to expression, expressed in pharyngeal, vulva and body wall muscles, intestine and several neurons.

Its subcellular location is the secreted. Functionally, metalloprotease. The chain is Zinc metalloproteinase nas-39 from Caenorhabditis elegans.